Reading from the N-terminus, the 1000-residue chain is Kinesin-like protein CIN8 (1000 aa).

Residues 1–26 (MPAENQNTGQDRSSNSISKNGNSQVG) are compositionally biased toward polar residues. Residues 1–28 (MPAENQNTGQDRSSNSISKNGNSQVGCH) form a disordered region. Residues 36–477 (NITVAVRCRG…LEYASKAKNI (442 aa)) enclose the Kinesin motor domain. 128 to 135 (GMTSTGKT) serves as a coordination point for ATP. Positions 220–242 (ANNTTSNSASSSRSNSRNSSPRS) are enriched in low complexity. Disordered regions lie at residues 220-248 (ANNT…DLTP) and 260-312 (KSLP…PNDQ). Residues 261-276 (SLPNTIKQQYQQQQAV) show a composition bias toward polar residues. Residues 277 to 301 (NSRNNSSSNSGSTTNNASSNTNTNN) show a composition bias toward low complexity. Positions 302–312 (GQRSSMAPNDQ) are enriched in polar residues. Coiled-coil stretches lie at residues 518–615 (MSQD…MALH) and 860–904 (ISVM…IKNS). The segment at 970-1000 (VISPKKHAIEDENKSSENVDNEGSRKMLKIE) is disordered. Residue serine 972 is modified to Phosphoserine. The span at 976 to 1000 (HAIEDENKSSENVDNEGSRKMLKIE) shows a compositional bias: basic and acidic residues.

This sequence belongs to the TRAFAC class myosin-kinesin ATPase superfamily. Kinesin family. BimC subfamily.

The protein resides in the cytoplasm. Its subcellular location is the cytoskeleton. It is found in the spindle. The protein localises to the mitochondrion. In terms of biological role, elongates the mitotic spindle by interacting with spindle microtubules to generate an outward force pushing spindle poles apart. Following spindle assembly, CIN8 and KIP1 apparently act to oppose a force, possibly generated by KAR3, that draws separated poles back together. The polypeptide is Kinesin-like protein CIN8 (CIN8) (Saccharomyces cerevisiae (strain ATCC 204508 / S288c) (Baker's yeast)).